The sequence spans 86 residues: Probable oxaloacetate decarboxylase gamma chain 1 (86 aa).

Residues 11–33 traverse the membrane as a helical segment; the sequence is AATLMVTGMAVVFLFLTLLVYLV.

It belongs to the OadG family. Heterotrimer of an alpha, a beta and a gamma subunit. The cofactor is Na(+).

It is found in the cell membrane. It catalyses the reaction oxaloacetate + 2 Na(+)(in) + H(+) = pyruvate + 2 Na(+)(out) + CO2. Functionally, catalyzes the decarboxylation of oxaloacetate coupled to Na(+) translocation. This Vibrio cholerae serotype O1 (strain ATCC 39315 / El Tor Inaba N16961) protein is Probable oxaloacetate decarboxylase gamma chain 1 (oadG1).